The primary structure comprises 722 residues: MRREEAIRAVVAGDHPDPFSFLGPHEEAGRRVVRTFLPGAARVRVLSAAGRPLGELERVHPEGFFSGPLSGNGRYRLRVLWEGGGEDELEDPYRFPPVLSDYDLYLFGEGNNHRIYRHLGAHPAEMDGVCGTAFAVWAPNARRVSVVGDFNLWDGRRHPMRNRNGVWEIFLPGVGPGALYKYEIKDAGGSLLPLKADPYGFFAEQYPGTASIVWDLSRHRWEDGEWMERRGSRNAPDAPMAIYEVHLGSWRRRPDGSHLTYRELAEELVPYVAGLGYTHVELLPPMEHPFGGSWGYQPVGLFAPTSRFGPPEDFKHLVDAFHRAGVGVIADWVPAHFPEDAHGLARFDGTHLYEHADPRKGRHPDWGTLIYNYGRNEVRNFLISNALFWLDEYHIDGLRVDAVASMLYLDYSRKEGEWVPNEHGGNENLEAIAFLRRMNEVVYGEAPGAFTVAEESTAWPMVSRPTYMGGLGFGYKWNMGWMHDTLQYMKEDPVHRRYHHDRITFGLLYAFNENFILPLSHDEVVHGKGSLLGRMPGDRWQRFANLRAYYGFMYGHPGKQLLFMGGEFAQEREWDSGSQLDWHLLEGGENRGVRDLVADLNALYRATPALHQVDFEPEGFEWVEGGDAEQSVVSFLRRARNPEDFVLVVSNFTPVVRHGYRVGVPASGPYAEVLNTDDPRYGGSGVANGELEAEEVPWHGRPFSLRLTLPPLATVFLRPRPV.

Catalysis depends on Asp401, which acts as the Nucleophile. Glu454 acts as the Proton donor in catalysis.

Belongs to the glycosyl hydrolase 13 family. GlgB subfamily. In terms of assembly, monomer.

The catalysed reaction is Transfers a segment of a (1-&gt;4)-alpha-D-glucan chain to a primary hydroxy group in a similar glucan chain.. The protein operates within glycan biosynthesis; glycogen biosynthesis. Catalyzes the formation of the alpha-1,6-glucosidic linkages in glycogen by scission of a 1,4-alpha-linked oligosaccharide from growing alpha-1,4-glucan chains and the subsequent attachment of the oligosaccharide to the alpha-1,6 position. The protein is 1,4-alpha-glucan branching enzyme GlgB of Rubrobacter xylanophilus (strain DSM 9941 / JCM 11954 / NBRC 16129 / PRD-1).